Consider the following 353-residue polypeptide: Protein O-mannose kinase (353 aa).

At 1–19 (MEKKAHFVKRDFPPREAPS) the chain is on the cytoplasmic side. A helical; Signal-anchor for type II membrane protein membrane pass occupies residues 20–40 (LLLLLLVVAVLLLNALLYLYL). Residues 41 to 353 (GNLHGSSGRA…AAMPSTREML (313 aa)) lie on the Lumenal side of the membrane. The region spanning 83-353 (VRKLKCVGEG…AAMPSTREML (271 aa)) is the Protein kinase domain. 2 N-linked (GlcNAc...) asparagine glycosylation sites follow: asparagine 163 and asparagine 237.

Belongs to the protein kinase superfamily. Ser/Thr protein kinase family. STKL subfamily.

It is found in the endoplasmic reticulum membrane. The enzyme catalyses 3-O-[beta-D-GalNAc-(1-&gt;3)-beta-D-GlcNAc-(1-&gt;4)-alpha-D-Man]-L-Thr-[protein] + ATP = 3-O-[beta-D-GalNAc-(1-&gt;3)-beta-D-GlcNAc-(1-&gt;4)-(O-6-P-alpha-D-Man)]-Thr-[protein] + ADP + H(+). Functionally, protein O-mannose kinase that specifically mediates phosphorylation at the 6-position of an O-mannose of the trisaccharide (N-acetylgalactosamine (GalNAc)-beta-1,3-N-acetylglucosamine (GlcNAc)-beta-1,4-mannose) to generate phosphorylated O-mannosyl trisaccharide (N-acetylgalactosamine-beta-1,3-N-acetylglucosamine-beta-1,4-(phosphate-6-)mannose). Phosphorylated O-mannosyl trisaccharide is a carbohydrate structure present in alpha-dystroglycan (DAG1), which is required for binding laminin G-like domain-containing extracellular proteins with high affinity. Only shows kinase activity when the GalNAc-beta-3-GlcNAc-beta-terminus is linked to the 4-position of O-mannose, suggesting that this disaccharide serves as the substrate recognition motif. This chain is Protein O-mannose kinase (POMK), found in Gallus gallus (Chicken).